The primary structure comprises 300 residues: Phospholipase A1 (300 aa).

A disulfide bridge links Cys-4 with Cys-87. The active-site Nucleophile is Ser-137. The Charge relay system role is filled by Asp-165. Cystine bridges form between Cys-176/Cys-181 and Cys-218/Cys-227. Catalysis depends on His-229, which acts as the Charge relay system. 3 disulfides stabilise this stretch: Cys-244-Cys-268, Cys-245-Cys-293, and Cys-261-Cys-266.

Belongs to the AB hydrolase superfamily. Lipase family. As to expression, expressed by the venom gland.

The protein resides in the secreted. It carries out the reaction a 1,2-diacyl-sn-glycero-3-phosphocholine + H2O = a 2-acyl-sn-glycero-3-phosphocholine + a fatty acid + H(+). Local inflammatory effects are inhibited by antiserotonin drugs (cyproheptadine and methysergide), indomethacin, betamethasone, and antihistamine (chlorpheniramine). In terms of biological role, catalyzes the hydrolysis of phosphatidylcholine with phospholipase A1 activity. Shows potent hemolytic activity that is responsible for its lethal effect. May act as an allergen. In vivo, induces local inflammatory effects. The chain is Phospholipase A1 from Vespa basalis (Hornet).